Reading from the N-terminus, the 198-residue chain is Peptidyl-tRNA hydrolase (198 aa).

Tyr-17 lines the tRNA pocket. The active-site Proton acceptor is His-22. TRNA contacts are provided by Tyr-74, Asn-76, and Asn-122.

This sequence belongs to the PTH family. Monomer.

It localises to the cytoplasm. The enzyme catalyses an N-acyl-L-alpha-aminoacyl-tRNA + H2O = an N-acyl-L-amino acid + a tRNA + H(+). Hydrolyzes ribosome-free peptidyl-tRNAs (with 1 or more amino acids incorporated), which drop off the ribosome during protein synthesis, or as a result of ribosome stalling. Functionally, catalyzes the release of premature peptidyl moieties from peptidyl-tRNA molecules trapped in stalled 50S ribosomal subunits, and thus maintains levels of free tRNAs and 50S ribosomes. The polypeptide is Peptidyl-tRNA hydrolase (Kineococcus radiotolerans (strain ATCC BAA-149 / DSM 14245 / SRS30216)).